A 147-amino-acid chain; its full sequence is Small ribosomal subunit protein uS12 (147 aa).

This sequence belongs to the universal ribosomal protein uS12 family. As to quaternary structure, part of the 30S ribosomal subunit.

In terms of biological role, with S4 and S5 plays an important role in translational accuracy. Located at the interface of the 30S and 50S subunits. The chain is Small ribosomal subunit protein uS12 from Methanococcus vannielii (strain ATCC 35089 / DSM 1224 / JCM 13029 / OCM 148 / SB).